Consider the following 853-residue polypeptide: Trimethylguanosine synthase (853 aa).

Residues 53–80 (NNSGDQATEEEEGGYSCGTAESHDSKGI) form a disordered region. At Ser55 the chain carries Phosphoserine. Position 60 is a phosphothreonine (Thr60). Phosphoserine occurs at positions 85, 89, 96, and 141. Tyr146 bears the Phosphotyrosine mark. A disordered region spans residues 149–187 (DDILASDDPSSIEQYENTRTYELQSKKDTETENPPVENT). Residue Ser154 is modified to Phosphoserine. Residues 156–171 (DPSSIEQYENTRTYEL) are compositionally biased toward polar residues. Ser189 carries the phosphoserine modification. 2 disordered regions span residues 334–461 (SQLD…GGIP) and 527–632 (DEEA…KKVN). The segment covering 367 to 382 (NGGTNEESNSSGNTNT) has biased composition (low complexity). Residues Ser412, Ser438, and Ser578 each carry the phosphoserine modification. Positions 431 to 442 (DIDENPASDFDD) are enriched in acidic residues. A compositionally biased stretch (polar residues) spans 564–578 (ETNNPEPEKCQSVSS). Residues 608-619 (PDSRQAETEAEV) are compositionally biased toward basic and acidic residues. Basic residues predominate over residues 620–630 (KKKKNKKKNKK). The tract at residues 631–846 (VNGLPPEIAA…TITAYFGDLI (216 aa)) is sufficient for catalytic activity. Asp719 is a binding site for S-adenosyl-L-methionine. Residue Trp766 participates in N(7)-methylguanosine binding.

The protein belongs to the methyltransferase superfamily. Trimethylguanosine synthase family. In terms of assembly, may form homooligomers. Interacts with CREBBP/CBP, EED/WAIT1, EP300/P300, NCOA6/PRIP, PPARBP/PBP and SMN. Ubiquitously expressed. High expression in heart, skeletal muscle, kidney, liver and placenta.

The protein localises to the cytoplasm. Its subcellular location is the nucleus. It localises to the cajal body. It is found in the nucleolus. The enzyme catalyses a 5'-end (N(7)-methyl 5'-triphosphoguanosine)-ribonucleoside in snRNA + S-adenosyl-L-methionine = a 5'-end (N(2),N(7)-dimethyl 5'-triphosphoguanosine)-ribonucleoside in snRNA + S-adenosyl-L-homocysteine + H(+). The catalysed reaction is a 5'-end (N(7)-methyl 5'-triphosphoguanosine)-ribonucleoside in snoRNA + S-adenosyl-L-methionine = a 5'-end (N(2),N(7)-dimethyl 5'-triphosphoguanosine)-ribonucleoside in snoRNA + S-adenosyl-L-homocysteine + H(+). It carries out the reaction a 5'-end (N(2),N(7)-dimethyl 5'-triphosphoguanosine)-ribonucleoside in snRNA + S-adenosyl-L-methionine = a 5'-end (N(2),N(2),N(7)-trimethyl 5'-triphosphoguanosine)-ribonucleoside in snRNA + S-adenosyl-L-homocysteine + H(+). It catalyses the reaction a 5'-end (N(2),N(7)-dimethyl 5'-triphosphoguanosine)-ribonucleoside in snoRNA + S-adenosyl-L-methionine = a 5'-end (N(2),N(2),N(7)-trimethyl 5'-triphosphoguanosine)-ribonucleoside in snoRNA + S-adenosyl-L-homocysteine + H(+). Catalyzes the 2 serial methylation steps for the conversion of the 7-monomethylguanosine (m(7)G) caps of snRNAs and snoRNAs to a 2,2,7-trimethylguanosine (m(2,2,7)G) cap structure. The enzyme is specific for guanine, and N7 methylation must precede N2 methylation. Hypermethylation of the m7G cap of U snRNAs leads to their concentration in nuclear foci, their colocalization with coilin and the formation of canonical Cajal bodies (CBs). Plays a role in transcriptional regulation. The protein is Trimethylguanosine synthase (TGS1) of Homo sapiens (Human).